Here is a 445-residue protein sequence, read N- to C-terminus: Tubulin beta-1 chain (445 aa).

Residues Gln11, Glu69, Ser138, Gly142, Thr143, Gly144, Asn204, and Asn226 each contribute to the GTP site. Position 69 (Glu69) interacts with Mg(2+). Residues 426–445 (QDATAEDEEEYEDEEEEMAA) form a disordered region. Residues 429 to 445 (TAEDEEEYEDEEEEMAA) are compositionally biased toward acidic residues.

Belongs to the tubulin family. As to quaternary structure, dimer of alpha and beta chains. A typical microtubule is a hollow water-filled tube with an outer diameter of 25 nm and an inner diameter of 15 nM. Alpha-beta heterodimers associate head-to-tail to form protofilaments running lengthwise along the microtubule wall with the beta-tubulin subunit facing the microtubule plus end conferring a structural polarity. Microtubules usually have 13 protofilaments but different protofilament numbers can be found in some organisms and specialized cells. Requires Mg(2+) as cofactor.

It is found in the cytoplasm. The protein resides in the cytoskeleton. Functionally, tubulin is the major constituent of microtubules, a cylinder consisting of laterally associated linear protofilaments composed of alpha- and beta-tubulin heterodimers. Microtubules grow by the addition of GTP-tubulin dimers to the microtubule end, where a stabilizing cap forms. Below the cap, tubulin dimers are in GDP-bound state, owing to GTPase activity of alpha-tubulin. The protein is Tubulin beta-1 chain (TUBB1) of Eleusine indica (Goosegrass).